The sequence spans 477 residues: MAENTVYFPEAFLAQMRAAMPAHLSFDDFIAACQRPLRRSIRVNTLKISVADFLSLVAPYGWQLTPVPWCEEGFWIERDGDDALPLGSTAEHLSGLFYIQEASSMLPVAALFADNPQPERVMDVAAAPGSKTTQIAARMGNAGGILANEFSASRVKVLHANISRCGISNVALTHFDGRVFGAALPEAFDAILLDAPCSGEGVVRKDADALKNWSPESNLDIAATQRELIDSAFHALRPGGTLVYSTCTLNREENQSVVQWLLSRYPQAVEILPLGDLFSGAADALTAEGFLHVFPQIYDCEGFFVARLRKTAAIDPLPAPGYKVGKFPFTPLKSREAAAVTAAANAVGLAWDAGHTLWQRDKELWLFPQAMEPLFGQVRFSRIGVRLAEVHNKGYRWQHEAVIAFAAPQRAFELTQEEAEEWYRGRDVYPQTAPQQDEAIVTFQGVPLGLAKRVGSRLKNSYPRELVRDGKLFAGKV.

S-adenosyl-L-methionine is bound by residues 125-131, E149, D176, and D194; that span reads AAAPGSK. C247 acts as the Nucleophile in catalysis.

The protein belongs to the class I-like SAM-binding methyltransferase superfamily. RsmB/NOP family.

The protein resides in the cytoplasm. It carries out the reaction cytidine(1407) in 16S rRNA + S-adenosyl-L-methionine = 5-methylcytidine(1407) in 16S rRNA + S-adenosyl-L-homocysteine + H(+). Its function is as follows. Specifically methylates the cytosine at position 1407 (m5C1407) of 16S rRNA. The chain is Ribosomal RNA small subunit methyltransferase F from Klebsiella pneumoniae (strain 342).